Reading from the N-terminus, the 349-residue chain is Heme A synthase (349 aa).

Helical transmembrane passes span 15–35, 101–121, 132–152, 162–182, and 203–223; these read AVQV…VVGG, LLGR…ALTG, FGLF…VASG, YRLA…VAVA, and VLVG…GLDA. Heme is bound at residue His-265. The next 3 helical transmembrane spans lie at 268–288, 296–316, and 317–337; these read IAYL…RLGG, LVFA…VHMV, and PLDL…AAMI. His-324 is a binding site for heme.

The protein belongs to the COX15/CtaA family. Type 2 subfamily. As to quaternary structure, interacts with CtaB. Heme b is required as a cofactor.

The protein resides in the cell membrane. The enzyme catalyses Fe(II)-heme o + 2 A + H2O = Fe(II)-heme a + 2 AH2. The protein operates within porphyrin-containing compound metabolism; heme A biosynthesis; heme A from heme O: step 1/1. Catalyzes the conversion of heme O to heme A by two successive hydroxylations of the methyl group at C8. The first hydroxylation forms heme I, the second hydroxylation results in an unstable dihydroxymethyl group, which spontaneously dehydrates, resulting in the formyl group of heme A. This is Heme A synthase from Azorhizobium caulinodans (strain ATCC 43989 / DSM 5975 / JCM 20966 / LMG 6465 / NBRC 14845 / NCIMB 13405 / ORS 571).